Reading from the N-terminus, the 493-residue chain is Glutamate--tRNA ligase (493 aa).

Positions 10–20 match the 'HIGH' region motif; it reads PSPTGFVHIGS. Zn(2+) is bound by residues Cys114, Cys116, Cys141, and Glu143. Positions 258–262 match the 'KMSKS' region motif; it reads KLSKR. Lys261 serves as a coordination point for ATP.

It belongs to the class-I aminoacyl-tRNA synthetase family. Glutamate--tRNA ligase type 1 subfamily. Monomer. Zn(2+) is required as a cofactor.

The protein localises to the cytoplasm. It catalyses the reaction tRNA(Glu) + L-glutamate + ATP = L-glutamyl-tRNA(Glu) + AMP + diphosphate. In terms of biological role, catalyzes the attachment of glutamate to tRNA(Glu) in a two-step reaction: glutamate is first activated by ATP to form Glu-AMP and then transferred to the acceptor end of tRNA(Glu). This Alkaliphilus metalliredigens (strain QYMF) protein is Glutamate--tRNA ligase.